A 951-amino-acid chain; its full sequence is Bifunctional glutamine synthetase adenylyltransferase/adenylyl-removing enzyme (951 aa).

Residues 1-445 (MSILPLPALP…VFDELIGDDA (445 aa)) are adenylyl removase. Positions 454-951 (HSSYSSLWQD…VSWNKWLMGA (498 aa)) are adenylyl transferase.

This sequence belongs to the GlnE family. Mg(2+) serves as cofactor.

It catalyses the reaction [glutamine synthetase]-O(4)-(5'-adenylyl)-L-tyrosine + phosphate = [glutamine synthetase]-L-tyrosine + ADP. The enzyme catalyses [glutamine synthetase]-L-tyrosine + ATP = [glutamine synthetase]-O(4)-(5'-adenylyl)-L-tyrosine + diphosphate. In terms of biological role, involved in the regulation of glutamine synthetase GlnA, a key enzyme in the process to assimilate ammonia. When cellular nitrogen levels are high, the C-terminal adenylyl transferase (AT) inactivates GlnA by covalent transfer of an adenylyl group from ATP to specific tyrosine residue of GlnA, thus reducing its activity. Conversely, when nitrogen levels are low, the N-terminal adenylyl removase (AR) activates GlnA by removing the adenylyl group by phosphorolysis, increasing its activity. The regulatory region of GlnE binds the signal transduction protein PII (GlnB) which indicates the nitrogen status of the cell. The sequence is that of Bifunctional glutamine synthetase adenylyltransferase/adenylyl-removing enzyme from Pectobacterium atrosepticum (strain SCRI 1043 / ATCC BAA-672) (Erwinia carotovora subsp. atroseptica).